Consider the following 216-residue polypeptide: Phosphoenolpyruvate guanylyltransferase (216 aa).

Phosphoenolpyruvate-binding residues include T139, G155, and S158.

The protein belongs to the CofC family.

The catalysed reaction is phosphoenolpyruvate + GTP + H(+) = enolpyruvoyl-2-diphospho-5'-guanosine + diphosphate. It functions in the pathway cofactor biosynthesis; coenzyme F420 biosynthesis. Its function is as follows. Guanylyltransferase that catalyzes the activation of phosphoenolpyruvate (PEP) as enolpyruvoyl-2-diphospho-5'-guanosine, via the condensation of PEP with GTP. It is involved in the biosynthesis of coenzyme F420, a hydride carrier cofactor. This Streptomyces avermitilis (strain ATCC 31267 / DSM 46492 / JCM 5070 / NBRC 14893 / NCIMB 12804 / NRRL 8165 / MA-4680) protein is Phosphoenolpyruvate guanylyltransferase.